Consider the following 218-residue polypeptide: Thiopurine S-methyltransferase (218 aa).

S-adenosyl-L-methionine is bound by residues Trp-10, Leu-45, Glu-66, and Arg-123.

It belongs to the class I-like SAM-binding methyltransferase superfamily. TPMT family.

Its subcellular location is the cytoplasm. The enzyme catalyses S-adenosyl-L-methionine + a thiopurine = S-adenosyl-L-homocysteine + a thiopurine S-methylether.. This chain is Thiopurine S-methyltransferase, found in Pseudomonas fluorescens (strain SBW25).